We begin with the raw amino-acid sequence, 583 residues long: 2-succinyl-5-enolpyruvyl-6-hydroxy-3-cyclohexene-1-carboxylate synthase (583 aa).

The protein belongs to the TPP enzyme family. MenD subfamily. As to quaternary structure, homodimer. Mg(2+) serves as cofactor. Requires Mn(2+) as cofactor. It depends on thiamine diphosphate as a cofactor.

The enzyme catalyses isochorismate + 2-oxoglutarate + H(+) = 5-enolpyruvoyl-6-hydroxy-2-succinyl-cyclohex-3-ene-1-carboxylate + CO2. The protein operates within quinol/quinone metabolism; 1,4-dihydroxy-2-naphthoate biosynthesis; 1,4-dihydroxy-2-naphthoate from chorismate: step 2/7. Its pathway is quinol/quinone metabolism; menaquinone biosynthesis. In terms of biological role, catalyzes the thiamine diphosphate-dependent decarboxylation of 2-oxoglutarate and the subsequent addition of the resulting succinic semialdehyde-thiamine pyrophosphate anion to isochorismate to yield 2-succinyl-5-enolpyruvyl-6-hydroxy-3-cyclohexene-1-carboxylate (SEPHCHC). This chain is 2-succinyl-5-enolpyruvyl-6-hydroxy-3-cyclohexene-1-carboxylate synthase, found in Chlorobium chlorochromatii (strain CaD3).